The primary structure comprises 208 residues: Uracil phosphoribosyltransferase (208 aa).

5-phospho-alpha-D-ribose 1-diphosphate-binding positions include R78, R103, and 130–138 (DPMLATGGS). Residues I193 and 198–200 (GDA) each bind uracil. 5-phospho-alpha-D-ribose 1-diphosphate is bound at residue D199.

The protein belongs to the UPRTase family. Requires Mg(2+) as cofactor.

The enzyme catalyses UMP + diphosphate = 5-phospho-alpha-D-ribose 1-diphosphate + uracil. It participates in pyrimidine metabolism; UMP biosynthesis via salvage pathway; UMP from uracil: step 1/1. Allosterically activated by GTP. Catalyzes the conversion of uracil and 5-phospho-alpha-D-ribose 1-diphosphate (PRPP) to UMP and diphosphate. This is Uracil phosphoribosyltransferase from Yersinia enterocolitica serotype O:8 / biotype 1B (strain NCTC 13174 / 8081).